A 607-amino-acid chain; its full sequence is MEVTGRLFIWAILAVSCRAQLNSTAAEGRPRCTASLGGANLGETHKALILNLNADENCTWTIERPENRSIRIIFSHIQLDPDSRCENESIKVFDGRSTSGPLLGEACSKNDFVPVFESSANSLTFQIVTDWTRVQRSVFIFYYFFSSGTTIPNCGGYLQTLEGSFSSPNYPRPHPELAYCVWHIQVEKGYKINLNFTELFLEMDEYCRFDFIAVYDGPSTTSGLLKQVCGRGTPTFESSSDAMTVVLSTDYANSYRGFFASYASTYVQEVNTHSLSCASDKMRVIISKSYLQSLNYHESNLQLNDPTCRPSVSNVVEFSIPLHECGTIKKIEDHTISYTNIITFTQSPESAVITRKRHLQIVVTCEMEYNSTVEILYITEDDVIQNQSVLGKYNTSMALYESGSFENLIQESPYYVDLNQTLFVQATLHTSDPSLVVFLDTCRASPTSDFASPTYDLISSGCSRDETCEVYPLFGHYGRFQFNAFKFLRHLSSVYLKCKILICDTSDHTSRCNQGCVSRRKRDIPSYKWKTDSVIGPIRLKRDRLVNGDSGLLPQTHEAEISKQPLSHLHLFSFMVLALNVVIVVTATVRHFLNRWKDHGYQKLQVY.

The signal sequence occupies residues 1–19 (MEVTGRLFIWAILAVSCRA). Residues 20-568 (QLNSTAAEGR…AEISKQPLSH (549 aa)) lie on the Lumenal side of the membrane. Asn-22 carries N-linked (GlcNAc...) asparagine glycosylation. Cysteines 32 and 58 form a disulfide. 2 CUB domains span residues 32–146 (CTAS…YFFS) and 154–265 (CGGY…YAST). An N-linked (GlcNAc...) asparagine glycan is attached at Asn-67. Intrachain disulfides connect Cys-85-Cys-107 and Cys-154-Cys-180. Asn-195 is a glycosylation site (N-linked (GlcNAc...) asparagine). Cysteines 207 and 229 form a disulfide. The region spanning 276–519 (SCASDKMRVI…SRCNQGCVSR (244 aa)) is the ZP domain. Asn-419 carries N-linked (GlcNAc...) asparagine glycosylation. Cys-442 and Cys-498 are disulfide-bonded. Residues 569 to 589 (LHLFSFMVLALNVVIVVTATV) form a helical membrane-spanning segment. Over 590–607 (RHFLNRWKDHGYQKLQVY) the chain is Cytoplasmic.

In terms of tissue distribution, expressed predominantly in epithelium of uterus and oviduct.

It is found in the zymogen granule membrane. Localized to zymogen granules, where it functions in trypsinogen activation. May indirectly regulate cell motility, cell-cell and cell/extracellular matrix interactions. This Rattus norvegicus (Rat) protein is CUB and zona pellucida-like domain-containing protein 1.